A 308-amino-acid chain; its full sequence is Oxygen-dependent coproporphyrinogen-III oxidase (308 aa).

Ser100 contributes to the substrate binding site. A divalent metal cation-binding residues include His104 and His114. Residue His114 is the Proton donor of the active site. 116–118 lines the substrate pocket; that stretch reads NFR. The a divalent metal cation site is built by His153 and His183. Positions 248 to 283 are important for dimerization; it reads YVEFNLVFDRGTIFGLQSGGRTESILSSMPPMATWK. 266 to 268 contacts substrate; that stretch reads GGR.

This sequence belongs to the aerobic coproporphyrinogen-III oxidase family. Homodimer. It depends on a divalent metal cation as a cofactor.

The protein resides in the cytoplasm. It carries out the reaction coproporphyrinogen III + O2 + 2 H(+) = protoporphyrinogen IX + 2 CO2 + 2 H2O. It functions in the pathway porphyrin-containing compound metabolism; protoporphyrin-IX biosynthesis; protoporphyrinogen-IX from coproporphyrinogen-III (O2 route): step 1/1. In terms of biological role, involved in the heme biosynthesis. Catalyzes the aerobic oxidative decarboxylation of propionate groups of rings A and B of coproporphyrinogen-III to yield the vinyl groups in protoporphyrinogen-IX. This Francisella tularensis subsp. mediasiatica (strain FSC147) protein is Oxygen-dependent coproporphyrinogen-III oxidase.